The following is a 306-amino-acid chain: D-alanine--D-alanine ligase (306 aa).

The region spanning 107–300 (KEAYRAAGLP…FGQLCAWMVE (194 aa)) is the ATP-grasp domain. Residue 134–184 (MQPPYVVKPYNEGSSVGVYIVTEAANGPPVLAPDLPATLMVEEYVPGRELS) coordinates ATP. Residues Asp-251, Glu-267, and Asn-269 each contribute to the Mg(2+) site.

This sequence belongs to the D-alanine--D-alanine ligase family. It depends on Mg(2+) as a cofactor. Mn(2+) is required as a cofactor.

It is found in the cytoplasm. It carries out the reaction 2 D-alanine + ATP = D-alanyl-D-alanine + ADP + phosphate + H(+). Its pathway is cell wall biogenesis; peptidoglycan biosynthesis. In terms of biological role, cell wall formation. The chain is D-alanine--D-alanine ligase from Ruegeria pomeroyi (strain ATCC 700808 / DSM 15171 / DSS-3) (Silicibacter pomeroyi).